A 532-amino-acid polypeptide reads, in one-letter code: Protein FAM227B (532 aa).

Residues 432–482 (DNKKDFKRVKQRIKDDIKFLREQQELIDKELDRIQAKASKNLQEVKNEFEN) are a coiled coil. Positions 494–532 (KEEYGGSTSASESPQSMQSPQSSSSFPTISEDFNNVEEG) are disordered. Low complexity predominate over residues 500 to 523 (STSASESPQSMQSPQSSSSFPTIS).

The protein belongs to the FAM227 family.

This is Protein FAM227B (Fam227b) from Mus musculus (Mouse).